Here is a 69-residue protein sequence, read N- to C-terminus: Putative membrane protein insertion efficiency factor (69 aa).

It belongs to the UPF0161 family.

It is found in the cell membrane. Its function is as follows. Could be involved in insertion of integral membrane proteins into the membrane. The polypeptide is Putative membrane protein insertion efficiency factor (Clostridium botulinum (strain Kyoto / Type A2)).